The chain runs to 614 residues: 1-deoxy-D-xylulose-5-phosphate synthase (614 aa).

Residues histidine 74 and 115-117 contribute to the thiamine diphosphate site; that span reads GHS. A Mg(2+)-binding site is contributed by aspartate 146. Residues 147 to 148, asparagine 175, tyrosine 282, and glutamate 363 each bind thiamine diphosphate; that span reads GA. Asparagine 175 is a Mg(2+) binding site.

It belongs to the transketolase family. DXPS subfamily. Homodimer. The cofactor is Mg(2+). It depends on thiamine diphosphate as a cofactor.

The catalysed reaction is D-glyceraldehyde 3-phosphate + pyruvate + H(+) = 1-deoxy-D-xylulose 5-phosphate + CO2. Its pathway is metabolic intermediate biosynthesis; 1-deoxy-D-xylulose 5-phosphate biosynthesis; 1-deoxy-D-xylulose 5-phosphate from D-glyceraldehyde 3-phosphate and pyruvate: step 1/1. Catalyzes the acyloin condensation reaction between C atoms 2 and 3 of pyruvate and glyceraldehyde 3-phosphate to yield 1-deoxy-D-xylulose-5-phosphate (DXP). This chain is 1-deoxy-D-xylulose-5-phosphate synthase, found in Methylobacillus flagellatus (strain ATCC 51484 / DSM 6875 / VKM B-1610 / KT).